Consider the following 341-residue polypeptide: Anthranilate phosphoribosyltransferase (341 aa).

5-phospho-alpha-D-ribose 1-diphosphate is bound by residues Gly-80, 83-84, Thr-88, 90-93, 108-116, and Ser-120; these read GD, NIST, and KHGNRAVSS. Gly-80 contributes to the anthranilate binding site. Ser-92 lines the Mg(2+) pocket. An anthranilate-binding site is contributed by Asn-111. Arg-166 is a binding site for anthranilate. Positions 225 and 226 each coordinate Mg(2+).

The protein belongs to the anthranilate phosphoribosyltransferase family. As to quaternary structure, homodimer. It depends on Mg(2+) as a cofactor.

The enzyme catalyses N-(5-phospho-beta-D-ribosyl)anthranilate + diphosphate = 5-phospho-alpha-D-ribose 1-diphosphate + anthranilate. It functions in the pathway amino-acid biosynthesis; L-tryptophan biosynthesis; L-tryptophan from chorismate: step 2/5. In terms of biological role, catalyzes the transfer of the phosphoribosyl group of 5-phosphorylribose-1-pyrophosphate (PRPP) to anthranilate to yield N-(5'-phosphoribosyl)-anthranilate (PRA). This Priestia megaterium (strain ATCC 12872 / QMB1551) (Bacillus megaterium) protein is Anthranilate phosphoribosyltransferase.